The primary structure comprises 554 residues: Heterochromatin protein 1-binding protein 3 (554 aa).

Alanine 2 is modified (N-acetylalanine). Phosphoserine is present on serine 6. Disordered stretches follow at residues 30 to 136 (LGEK…KTIP) and 142 to 161 (SASQ…SPRP). Phosphothreonine is present on threonine 51. Residues 60-71 (GEEEKPEPDGSS) are compositionally biased toward acidic residues. Residue lysine 64 forms a Glycyl lysine isopeptide (Lys-Gly) (interchain with G-Cter in SUMO2) linkage. 2 positions are modified to phosphothreonine: glutamate 72 and threonine 85. Residues 72 to 93 (EESISTVEEQENETPPATSSEA) are compositionally biased toward polar residues. The span at 94–129 (EQPKGEPESGEKEENNNKSAEEPKKDEKDQSKEKEK) shows a compositional bias: basic and acidic residues. Lysine 97 participates in a covalent cross-link: Glycyl lysine isopeptide (Lys-Gly) (interchain with G-Cter in SUMO2). A compositionally biased stretch (polar residues) spans 142–156 (SASQLARAQRQTPMA). Phosphoserine occurs at positions 144, 157, and 158. In terms of domain architecture, H15 1 spans 159–234 (PRPKMDAILT…GASGSFVVVQ (76 aa)). At lysine 192 the chain carries N6-acetyllysine. The interval 229 to 254 (SFVVVQKSKPPQKSKNRKKGSALDPE) is disordered. The span at 238 to 248 (PPQKSKNRKKG) shows a compositional bias: basic residues. Position 249 is a phosphoserine (serine 249). A PxVxL motif motif is present at residues 255-259 (PQVKL). 2 H15 domains span residues 255–330 (PQVK…QLKK) and 337–413 (LGGS…QLSF). A Glycyl lysine isopeptide (Lys-Gly) (interchain with G-Cter in SUMO2) cross-link involves residue lysine 258. The tract at residues 420-554 (GVLFPKKESG…AMKKSFKTKK (135 aa)) is disordered. The span at 430–451 (GSDDEDEDDDDDESSEDSEDEE) shows a compositional bias: acidic residues. Serine 443, serine 444, and serine 447 each carry phosphoserine. A compositionally biased stretch (polar residues) spans 464–475 (AKSQGKTASMKQ). Composition is skewed to basic residues over residues 490–511 (GKVR…RKAR) and 544–554 (SAMKKSFKTKK).

In terms of assembly, interacts (via PxVxL motif) with CBX5 (via Trp-174).

It localises to the nucleus. It is found in the chromosome. Component of heterochromatin that maintains heterochromatin integrity during G1/S progression and regulates the duration of G1 phase to critically influence cell proliferative capacity. May play a role in hypoxia-induced oncogenesis. This Mus musculus (Mouse) protein is Heterochromatin protein 1-binding protein 3 (Hp1bp3).